The chain runs to 476 residues: Aspartyl/glutamyl-tRNA(Asn/Gln) amidotransferase subunit B (476 aa).

It belongs to the GatB/GatE family. GatB subfamily. Heterotrimer of A, B and C subunits.

It carries out the reaction L-glutamyl-tRNA(Gln) + L-glutamine + ATP + H2O = L-glutaminyl-tRNA(Gln) + L-glutamate + ADP + phosphate + H(+). The catalysed reaction is L-aspartyl-tRNA(Asn) + L-glutamine + ATP + H2O = L-asparaginyl-tRNA(Asn) + L-glutamate + ADP + phosphate + 2 H(+). In terms of biological role, allows the formation of correctly charged Asn-tRNA(Asn) or Gln-tRNA(Gln) through the transamidation of misacylated Asp-tRNA(Asn) or Glu-tRNA(Gln) in organisms which lack either or both of asparaginyl-tRNA or glutaminyl-tRNA synthetases. The reaction takes place in the presence of glutamine and ATP through an activated phospho-Asp-tRNA(Asn) or phospho-Glu-tRNA(Gln). The polypeptide is Aspartyl/glutamyl-tRNA(Asn/Gln) amidotransferase subunit B (Vesicomyosocius okutanii subsp. Calyptogena okutanii (strain HA)).